Reading from the N-terminus, the 330-residue chain is Aspartate--ammonia ligase (330 aa).

This sequence belongs to the class-II aminoacyl-tRNA synthetase family. AsnA subfamily.

The protein resides in the cytoplasm. It catalyses the reaction L-aspartate + NH4(+) + ATP = L-asparagine + AMP + diphosphate + H(+). It functions in the pathway amino-acid biosynthesis; L-asparagine biosynthesis; L-asparagine from L-aspartate (ammonia route): step 1/1. This Streptococcus pyogenes serotype M1 protein is Aspartate--ammonia ligase.